A 137-amino-acid polypeptide reads, in one-letter code: Small ribosomal subunit protein uS12 (137 aa).

Residues 1–57 (MPTINQLVRKPRKSKTKQSDSPVLNRGFNSKKKQFTNLNSPQKRGVCTRVGTMTPRK) form a disordered region. Asp-102 carries the 3-methylthioaspartic acid modification. The interval 118–137 (SGVDGRRQGRSLYGTKKPKN) is disordered.

It belongs to the universal ribosomal protein uS12 family. Part of the 30S ribosomal subunit. Contacts proteins S8 and S17. May interact with IF1 in the 30S initiation complex.

Its function is as follows. With S4 and S5 plays an important role in translational accuracy. In terms of biological role, interacts with and stabilizes bases of the 16S rRNA that are involved in tRNA selection in the A site and with the mRNA backbone. Located at the interface of the 30S and 50S subunits, it traverses the body of the 30S subunit contacting proteins on the other side and probably holding the rRNA structure together. The combined cluster of proteins S8, S12 and S17 appears to hold together the shoulder and platform of the 30S subunit. The chain is Small ribosomal subunit protein uS12 from Staphylococcus epidermidis (strain ATCC 12228 / FDA PCI 1200).